The following is a 330-amino-acid chain: Stimulated by retinoic acid gene 8 protein homolog (330 aa).

A Nuclear localization signal (NLS) motif is present at residues R50–R55. Residues Q88 to A112 adopt a coiled-coil conformation.

As to quaternary structure, interacts with XPO1. Interacts with MEIOSIN. In terms of processing, phosphorylated. As to expression, expressed specifically in testis and fetal ovaries.

Its subcellular location is the cytoplasm. The protein resides in the nucleus. Functionally, meiosis-inducer required for the transition into meiosis for both female and male germ cells. In female germ cells, acts downstream of ZGLP1 as a key effector of the meiotic program: required for premeiotic DNA replication and subsequent events in meiotic prophase. During spermatogenesis, next to its role in meiotic initiation, promotes (but is not required for) spermatogonial differentiation. In complex with MEIOSIN, directly activates the transcription of a subset of critical meiotic genes playing a central role in cell-cycle switching from mitosis to meiosis. The polypeptide is Stimulated by retinoic acid gene 8 protein homolog (Homo sapiens (Human)).